Reading from the N-terminus, the 78-residue chain is DNA-directed RNA polymerase subunit omega (78 aa).

This sequence belongs to the RNA polymerase subunit omega family. As to quaternary structure, in cyanobacteria the RNAP catalytic core is composed of 2 alpha, 1 beta, 1 beta', 1 gamma and 1 omega subunit. When a sigma factor is associated with the core the holoenzyme is formed, which can initiate transcription.

It catalyses the reaction RNA(n) + a ribonucleoside 5'-triphosphate = RNA(n+1) + diphosphate. In terms of biological role, promotes RNA polymerase assembly. Latches the N- and C-terminal regions of the beta' subunit thereby facilitating its interaction with the beta and alpha subunits. The chain is DNA-directed RNA polymerase subunit omega from Prochlorococcus marinus subsp. pastoris (strain CCMP1986 / NIES-2087 / MED4).